Reading from the N-terminus, the 278-residue chain is DNA repair protein RecO (278 aa).

Over residues 1 to 12 (MGTNDALTSTED) the composition is skewed to polar residues. The tract at residues 1–41 (MGTNDALTSTEDAVTAGANDAPLPAPPEPPRKARRATSRTS) is disordered.

Belongs to the RecO family.

Its function is as follows. Involved in DNA repair and RecF pathway recombination. The polypeptide is DNA repair protein RecO (Burkholderia orbicola (strain AU 1054)).